Reading from the N-terminus, the 977-residue chain is Poly [ADP-ribose] polymerase 1 (977 aa).

2 PARP-type zinc fingers span residues 8–91 (WKAE…GSAP) and 104–179 (CTIE…KKDA). Zn(2+) contacts are provided by Cys20, Cys23, His52, Cys55, Cys116, Cys119, His141, and Cys144. Disordered regions lie at residues 177 to 199 (KDAP…QNDI) and 218 to 237 (DKGK…DLQE). One can recognise a PADR1 zinc-binding domain in the interval 227-365 (DSNANSSDLQ…AKKPERVLPP (139 aa)). In terms of domain architecture, SAP spans 254–288 (KKHVSTAELRNMLEANGQDTSGPERHLLDRCADGM). Residues 291–335 (GALGTCPVCSSFLYYHGGQYHCSGYVSEWSKCTYSTTEPVRSKKK) form a zinc ribbon region. Zn(2+)-binding residues include Cys296, Cys299, Cys312, and Cys322. In terms of domain architecture, BRCT spans 381–473 (SFLSEGLDKL…RVLPFDLYKV (93 aa)). The WGR domain occupies 504-604 (TGHILEDGKS…TNFQKQPGKF (101 aa)). Residues 626 to 745 (KSSLPPQLLE…DIEIASKLVG (120 aa)) enclose the PARP alpha-helical domain. Residues 752–977 (ESLDDKYKKL…LLKVRFHHKR (226 aa)) enclose the PARP catalytic domain.

It belongs to the ARTD/PARP family.

The protein localises to the nucleus. The enzyme catalyses NAD(+) + (ADP-D-ribosyl)n-acceptor = nicotinamide + (ADP-D-ribosyl)n+1-acceptor + H(+).. The catalysed reaction is L-aspartyl-[protein] + NAD(+) = 4-O-(ADP-D-ribosyl)-L-aspartyl-[protein] + nicotinamide. It carries out the reaction L-glutamyl-[protein] + NAD(+) = 5-O-(ADP-D-ribosyl)-L-glutamyl-[protein] + nicotinamide. Involved in the base excision repair (BER) pathway, by catalyzing the poly(ADP-ribosyl)ation of a limited number of acceptor proteins involved in chromatin architecture and in DNA metabolism. This modification follows DNA damages and appears as an obligatory step in a detection/signaling pathway leading to the reparation of DNA strand breaks. The polypeptide is Poly [ADP-ribose] polymerase 1 (PARP1) (Oryza sativa subsp. japonica (Rice)).